The primary structure comprises 347 residues: Lipoyl synthase (347 aa).

[4Fe-4S] cluster contacts are provided by Cys55, Cys60, Cys66, Cys81, Cys85, Cys88, and Ser292. In terms of domain architecture, Radical SAM core spans 67–281 (WEDREATFLI…RDYGHDIGFA (215 aa)).

This sequence belongs to the radical SAM superfamily. Lipoyl synthase family. [4Fe-4S] cluster serves as cofactor.

The protein localises to the cytoplasm. The catalysed reaction is [[Fe-S] cluster scaffold protein carrying a second [4Fe-4S](2+) cluster] + N(6)-octanoyl-L-lysyl-[protein] + 2 oxidized [2Fe-2S]-[ferredoxin] + 2 S-adenosyl-L-methionine + 4 H(+) = [[Fe-S] cluster scaffold protein] + N(6)-[(R)-dihydrolipoyl]-L-lysyl-[protein] + 4 Fe(3+) + 2 hydrogen sulfide + 2 5'-deoxyadenosine + 2 L-methionine + 2 reduced [2Fe-2S]-[ferredoxin]. It participates in protein modification; protein lipoylation via endogenous pathway; protein N(6)-(lipoyl)lysine from octanoyl-[acyl-carrier-protein]: step 2/2. Catalyzes the radical-mediated insertion of two sulfur atoms into the C-6 and C-8 positions of the octanoyl moiety bound to the lipoyl domains of lipoate-dependent enzymes, thereby converting the octanoylated domains into lipoylated derivatives. This is Lipoyl synthase from Corynebacterium kroppenstedtii (strain DSM 44385 / JCM 11950 / CIP 105744 / CCUG 35717).